Reading from the N-terminus, the 1392-residue chain is ABC transporter G family member 42 (1392 aa).

Positions 1 to 18 (MTMSQTDGVEFASRNTNE) are enriched in polar residues. The tract at residues 1–26 (MTMSQTDGVEFASRNTNENGHDDDDQ) is disordered. The 275-residue stretch at 139-413 (SKLSRFMCSN…FEDCGFKCPN (275 aa)) folds into the ABC transporter 1 domain. An ATP-binding site is contributed by 173–180 (GPPSCGKT). The ABC transmembrane type-2 1 domain occupies 491–703 (DMLKACSRRE…AEIGLTANEF (213 aa)). A run of 6 helical transmembrane segments spans residues 509–529 (FVYV…MTVY), 543–563 (YLMG…LPEL), 596–616 (IPIS…VIGY), 627–647 (FLIL…IAAV), 652–672 (VVAT…GGFI), and 739–759 (FGAL…ALTF). Residues 800–1045 (FTFQDVQYII…VIEYFMRIHG (246 aa)) enclose the ABC transporter 2 domain. 837 to 844 (GVSGAGKT) serves as a coordination point for ATP. Residues 1117–1331 (EQFKACLWKQ…VLNGLLTSQY (215 aa)) enclose the ABC transmembrane type-2 2 domain. 7 helical membrane passes run 1136–1156 (YNLT…ILFW), 1175–1195 (MFTV…FSVA), 1215–1237 (YSLA…YVII), 1255–1275 (FYSI…LVVV), 1281–1301 (IAFT…GYVM), 1309–1329 (WWIW…LLTS), and 1364–1384 (LVAV…AFFI).

The protein belongs to the ABC transporter superfamily. ABCG family. PDR (TC 3.A.1.205) subfamily. Confined to shoots.

Its subcellular location is the membrane. Its function is as follows. May be a general defense protein. The chain is ABC transporter G family member 42 (ABCG42) from Arabidopsis thaliana (Mouse-ear cress).